A 405-amino-acid polypeptide reads, in one-letter code: Glucose-1-phosphate adenylyltransferase 1 (405 aa).

Alpha-D-glucose 1-phosphate contacts are provided by residues Y96, G161, 176-177 (EK), and S194.

Belongs to the bacterial/plant glucose-1-phosphate adenylyltransferase family. Homotetramer.

It carries out the reaction alpha-D-glucose 1-phosphate + ATP + H(+) = ADP-alpha-D-glucose + diphosphate. It participates in glycan biosynthesis; glycogen biosynthesis. Its function is as follows. Involved in the biosynthesis of ADP-glucose, a building block required for the elongation reactions to produce glycogen. Catalyzes the reaction between ATP and alpha-D-glucose 1-phosphate (G1P) to produce pyrophosphate and ADP-Glc. The protein is Glucose-1-phosphate adenylyltransferase 1 of Vibrio vulnificus (strain YJ016).